The chain runs to 154 residues: UPF0225 protein YE2246 (154 aa).

The protein belongs to the UPF0225 family.

The chain is UPF0225 protein YE2246 from Yersinia enterocolitica serotype O:8 / biotype 1B (strain NCTC 13174 / 8081).